Here is an 810-residue protein sequence, read N- to C-terminus: Soluble starch synthase 2-3, chloroplastic/amyloplastic (810 aa).

The transit peptide at 1–16 (MSSAVVASSTTFLVAL) directs the protein to the chloroplast. Disordered regions lie at residues 43–265 (GRAG…PIPA) and 281–313 (EPDAAEDGDDDDDWADSDASDSEIDQDDDSGPL). The span at 63 to 83 (RDAGVVRRADDGENEAAVERA) shows a compositional bias: basic and acidic residues. A compositionally biased stretch (acidic residues) spans 84 to 93 (GEDDEEEEEF). A compositionally biased stretch (basic residues) spans 102 to 116 (RSRRGGVGKVLKRRG). Low complexity predominate over residues 129–148 (DAARVRGAAAPAPAPTQDAA). Over residues 281–310 (EPDAAEDGDDDDDWADSDASDSEIDQDDDS) the composition is skewed to acidic residues. Lysine 333 provides a ligand contact to ADP-alpha-D-glucose.

It belongs to the glycosyltransferase 1 family. Bacterial/plant glycogen synthase subfamily. As to expression, expressed most exclusively in endosperm.

Its subcellular location is the plastid. The protein resides in the amyloplast. The protein localises to the chloroplast. The enzyme catalyses [(1-&gt;4)-alpha-D-glucosyl](n) + ADP-alpha-D-glucose = [(1-&gt;4)-alpha-D-glucosyl](n+1) + ADP + H(+). It functions in the pathway glycan biosynthesis; starch biosynthesis. Functionally, plays an important role during endosperm starch synthesis. Determines the type of amylopectin structure of starch grain. Synthesizes long B1 amylopectin chains by elongating short A and B1 chains, independently of the other soluble starch synthases. Barely active in japonica subspecies. The protein is Soluble starch synthase 2-3, chloroplastic/amyloplastic (SSII-3) of Oryza sativa subsp. indica (Rice).